Reading from the N-terminus, the 339-residue chain is Probable scoulerine-9-O-methyltransferase OMT3B (339 aa).

An S-adenosyl-L-methionine-binding site is contributed by Met161. Asp164 contributes to the substrate binding site. Residues Thr165, Gly191, Asp214, 228-229, and Lys242 contribute to the S-adenosyl-L-methionine site; that span reads DV. 243–247 contributes to the substrate binding site; it reads SILHE. His246 serves as the catalytic Proton acceptor.

It belongs to the class I-like SAM-binding methyltransferase superfamily. Cation-independent O-methyltransferase family. COMT subfamily.

The enzyme catalyses (S)-scoulerine + S-adenosyl-L-methionine = (S)-tetrahydrocolumbamine + S-adenosyl-L-homocysteine + H(+). It functions in the pathway alkaloid biosynthesis. In terms of biological role, methyltransferase involved in the biosynthesis of the benzylisoquinoline alkaloid noscapine. Catalyzes the conversion of (S)-scoulerine to (S)-tetrahydrocolumbamine. The protein is Probable scoulerine-9-O-methyltransferase OMT3B of Papaver somniferum (Opium poppy).